A 307-amino-acid chain; its full sequence is Probable rRNA-processing protein EBP2 homolog (307 aa).

3 disordered regions span residues 1–22, 189–208, and 236–307; these read MSDF…SDAE, QRKM…EAEK, and ESKQ…KGRK. Residues 205–252 adopt a coiled-coil conformation; that stretch reads EAEKKDMLDKLKKFRKGKLKNLDFLEDAKALESKQKQSAENRKKRNKK. The segment covering 236 to 245 has biased composition (basic and acidic residues); sequence ESKQKQSAEN. 2 stretches are compositionally biased toward basic residues: residues 246–266 and 294–307; these read RKKR…KRNT and RLGK…KGRK.

It belongs to the EBP2 family.

It is found in the nucleus. The protein resides in the nucleolus. In terms of biological role, required for the processing of the 27S pre-rRNA. This Drosophila melanogaster (Fruit fly) protein is Probable rRNA-processing protein EBP2 homolog.